A 93-amino-acid polypeptide reads, in one-letter code: Pyrimidine/purine nucleoside phosphorylase (93 aa).

The protein belongs to the nucleoside phosphorylase PpnP family.

It catalyses the reaction a purine D-ribonucleoside + phosphate = a purine nucleobase + alpha-D-ribose 1-phosphate. The catalysed reaction is adenosine + phosphate = alpha-D-ribose 1-phosphate + adenine. It carries out the reaction cytidine + phosphate = cytosine + alpha-D-ribose 1-phosphate. The enzyme catalyses guanosine + phosphate = alpha-D-ribose 1-phosphate + guanine. It catalyses the reaction inosine + phosphate = alpha-D-ribose 1-phosphate + hypoxanthine. The catalysed reaction is thymidine + phosphate = 2-deoxy-alpha-D-ribose 1-phosphate + thymine. It carries out the reaction uridine + phosphate = alpha-D-ribose 1-phosphate + uracil. The enzyme catalyses xanthosine + phosphate = alpha-D-ribose 1-phosphate + xanthine. Functionally, catalyzes the phosphorolysis of diverse nucleosides, yielding D-ribose 1-phosphate and the respective free bases. Can use uridine, adenosine, guanosine, cytidine, thymidine, inosine and xanthosine as substrates. Also catalyzes the reverse reactions. The sequence is that of Pyrimidine/purine nucleoside phosphorylase from Cellvibrio japonicus (strain Ueda107) (Pseudomonas fluorescens subsp. cellulosa).